A 196-amino-acid polypeptide reads, in one-letter code: Imidazoleglycerol-phosphate dehydratase (196 aa).

Belongs to the imidazoleglycerol-phosphate dehydratase family.

The protein resides in the cytoplasm. The enzyme catalyses D-erythro-1-(imidazol-4-yl)glycerol 3-phosphate = 3-(imidazol-4-yl)-2-oxopropyl phosphate + H2O. Its pathway is amino-acid biosynthesis; L-histidine biosynthesis; L-histidine from 5-phospho-alpha-D-ribose 1-diphosphate: step 6/9. In Akkermansia muciniphila (strain ATCC BAA-835 / DSM 22959 / JCM 33894 / BCRC 81048 / CCUG 64013 / CIP 107961 / Muc), this protein is Imidazoleglycerol-phosphate dehydratase.